A 215-amino-acid chain; its full sequence is Large ribosomal subunit protein bL25 (215 aa).

Positions 192-203 (EEATEEEEEAAE) are enriched in acidic residues. The interval 192–215 (EEATEEEEEAAEPEVIKRKEEEEE) is disordered. The segment covering 205 to 215 (EVIKRKEEEEE) has biased composition (basic and acidic residues).

The protein belongs to the bacterial ribosomal protein bL25 family. CTC subfamily. As to quaternary structure, part of the 50S ribosomal subunit; part of the 5S rRNA/L5/L18/L25 subcomplex. Contacts the 5S rRNA. Binds to the 5S rRNA independently of L5 and L18.

In terms of biological role, this is one of the proteins that binds to the 5S RNA in the ribosome where it forms part of the central protuberance. The sequence is that of Large ribosomal subunit protein bL25 from Thermotoga sp. (strain RQ2).